Here is a 1296-residue protein sequence, read N- to C-terminus: DNA-directed RNA polymerase subunit beta' (1296 aa).

Zn(2+)-binding residues include cysteine 60, cysteine 62, cysteine 75, and cysteine 78. Positions 535, 537, and 539 each coordinate Mg(2+). Zn(2+) contacts are provided by cysteine 877, cysteine 954, cysteine 961, and cysteine 964.

This sequence belongs to the RNA polymerase beta' chain family. As to quaternary structure, the RNAP catalytic core consists of 2 alpha, 1 beta, 1 beta' and 1 omega subunit. When a sigma factor is associated with the core the holoenzyme is formed, which can initiate transcription. It depends on Mg(2+) as a cofactor. Zn(2+) serves as cofactor.

It catalyses the reaction RNA(n) + a ribonucleoside 5'-triphosphate = RNA(n+1) + diphosphate. In terms of biological role, DNA-dependent RNA polymerase catalyzes the transcription of DNA into RNA using the four ribonucleoside triphosphates as substrates. This is DNA-directed RNA polymerase subunit beta' from Beutenbergia cavernae (strain ATCC BAA-8 / DSM 12333 / CCUG 43141 / JCM 11478 / NBRC 16432 / NCIMB 13614 / HKI 0122).